A 212-amino-acid polypeptide reads, in one-letter code: ATP-dependent dethiobiotin synthetase BioD (212 aa).

12-17 (DCGKTF) serves as a coordination point for ATP. Residue T16 coordinates Mg(2+). K33 is an active-site residue. Position 37 (S37) interacts with substrate. ATP contacts are provided by residues D50, 110–113 (EGAG), and 170–171 (NC). The Mg(2+) site is built by D50 and E110.

Belongs to the dethiobiotin synthetase family. As to quaternary structure, homodimer. Mg(2+) is required as a cofactor.

The protein localises to the cytoplasm. The catalysed reaction is (7R,8S)-7,8-diammoniononanoate + CO2 + ATP = (4R,5S)-dethiobiotin + ADP + phosphate + 3 H(+). It functions in the pathway cofactor biosynthesis; biotin biosynthesis; biotin from 7,8-diaminononanoate: step 1/2. Catalyzes a mechanistically unusual reaction, the ATP-dependent insertion of CO2 between the N7 and N8 nitrogen atoms of 7,8-diaminopelargonic acid (DAPA, also called 7,8-diammoniononanoate) to form a ureido ring. The chain is ATP-dependent dethiobiotin synthetase BioD from Legionella pneumophila (strain Paris).